We begin with the raw amino-acid sequence, 266 residues long: 22 kDa alpha-zein 8 (266 aa).

Residues 1–21 (MATKILALLALLALFVSATNA) form the signal peptide.

This sequence belongs to the zein family.

Its function is as follows. Zeins are major seed storage proteins. This is 22 kDa alpha-zein 8 from Zea mays (Maize).